The following is a 357-amino-acid chain: Uroporphyrinogen decarboxylase (357 aa).

Substrate is bound by residues 27 to 31, Asp77, Tyr154, Ser209, and His330; that span reads RQAGR.

This sequence belongs to the uroporphyrinogen decarboxylase family. As to quaternary structure, homodimer.

Its subcellular location is the cytoplasm. It carries out the reaction uroporphyrinogen III + 4 H(+) = coproporphyrinogen III + 4 CO2. It functions in the pathway porphyrin-containing compound metabolism; protoporphyrin-IX biosynthesis; coproporphyrinogen-III from 5-aminolevulinate: step 4/4. Functionally, catalyzes the decarboxylation of four acetate groups of uroporphyrinogen-III to yield coproporphyrinogen-III. This Acinetobacter baumannii (strain ACICU) protein is Uroporphyrinogen decarboxylase.